The chain runs to 248 residues: Adenosylcobinamide-GDP ribazoletransferase (248 aa).

Helical transmembrane passes span 24-44 (EVNL…IGAW), 47-67 (LVFT…AGLF), 70-90 (IIIT…GLFS), 106-126 (VGAN…ALFL), 134-154 (IGWL…LLFA), 165-185 (LGSI…LFVL), 186-206 (FILG…VILF), and 228-248 (AGGQ…WGLI).

The protein belongs to the CobS family. Mg(2+) is required as a cofactor.

It localises to the cell membrane. It carries out the reaction alpha-ribazole + adenosylcob(III)inamide-GDP = adenosylcob(III)alamin + GMP + H(+). It catalyses the reaction alpha-ribazole 5'-phosphate + adenosylcob(III)inamide-GDP = adenosylcob(III)alamin 5'-phosphate + GMP + H(+). The protein operates within cofactor biosynthesis; adenosylcobalamin biosynthesis; adenosylcobalamin from cob(II)yrinate a,c-diamide: step 7/7. In terms of biological role, joins adenosylcobinamide-GDP and alpha-ribazole to generate adenosylcobalamin (Ado-cobalamin). Also synthesizes adenosylcobalamin 5'-phosphate from adenosylcobinamide-GDP and alpha-ribazole 5'-phosphate. This is Adenosylcobinamide-GDP ribazoletransferase from Listeria welshimeri serovar 6b (strain ATCC 35897 / DSM 20650 / CCUG 15529 / CIP 8149 / NCTC 11857 / SLCC 5334 / V8).